A 274-amino-acid polypeptide reads, in one-letter code: UPF0173 metal-dependent hydrolase Adeh_1068 (274 aa).

It belongs to the UPF0173 family.

The sequence is that of UPF0173 metal-dependent hydrolase Adeh_1068 from Anaeromyxobacter dehalogenans (strain 2CP-C).